A 124-amino-acid chain; its full sequence is uncharacterized protein (124 aa).

Disordered regions lie at residues 1–31 (MAQHAFQDQEQEEGRNSRQQKRKSFEDTMKP) and 59–124 (EDAR…YPQP). 2 stretches are compositionally biased toward polar residues: residues 65–86 (GMSSVTPTSSASKIGTKTSDAA) and 98–124 (TGEQPSGIQAQNLRGQSSDQSACYPQP).

This is an uncharacterized protein from Bos taurus (Bovine).